Consider the following 356-residue polypeptide: Carbohydrate sulfotransferase 10 (356 aa).

The Cytoplasmic segment spans residues 1-6 (MHHQWL). Residues 7-27 (LLAACFWVIFMFMVASKFITL) traverse the membrane as a helical; Signal-anchor for type II membrane protein segment. Over 28–356 (TFKDPDVYSA…GYQKPDFLLN (329 aa)) the chain is Lumenal. N-linked (GlcNAc...) asparagine glycosylation occurs at Asn-99. 3'-phosphoadenylyl sulfate is bound by residues 127–133 (PKVGNTQ) and 189–197 (RDPFERLIS). Asn-228 and Asn-316 each carry an N-linked (GlcNAc...) asparagine glycan.

This sequence belongs to the sulfotransferase 2 family.

Its subcellular location is the golgi apparatus membrane. The catalysed reaction is 3-O-{beta-D-GlcA-(1-&gt;[3)-alpha-D-Xyl-(1-&gt;3)-beta-D-GlcA-(1-&gt;](n)-4)-beta-D-Xyl-(1-&gt;4)-Rib-ol-P-Rib-ol-P-3-beta-D-GalNAc-(1-&gt;3)-beta-D-GlcNAc-(1-&gt;4)-O-6-P-alpha-D-Man}-L-Thr-[protein] + 3'-phosphoadenylyl sulfate = 3-O-{O-3-S-beta-D-GlcA-(1-&gt;[3)-alpha-D-Xyl-(1-&gt;3)-beta-D-GlcA-(1-&gt;](n)-4)-beta-D-Xyl-(1-&gt;4)-Rib-ol-P-Rib-ol-P-3-beta-D-GalNAc-(1-&gt;3)-beta-D-GlcNAc-(1-&gt;4)-O-6-P-alpha-D-Man}-L-Thr-[protein] + adenosine 3',5'-bisphosphate + H(+). It catalyses the reaction 17beta-estradiol 3-O-(beta-D-glucuronate) + 3'-phosphoadenylyl sulfate = 17beta-estradiol 3-O-(3-sulfo-beta-D-glucuronate) + adenosine 3',5'-bisphosphate + H(+). The enzyme catalyses 17beta-estradiol 3-O-(beta-D-glucuronate) 17-sulfate + 3'-phosphoadenylyl sulfate = 17beta-estradiol 3-O-(3-sulfo-beta-D-glucuronate) 17-sulfate + adenosine 3',5'-bisphosphate + H(+). It carries out the reaction 17beta-estradiol 17-O-(beta-D-glucuronate) + 3'-phosphoadenylyl sulfate = 17beta-estradiol 17-O-(3-sulfo-beta-D-glucuronate) + adenosine 3',5'-bisphosphate + H(+). The catalysed reaction is 16alpha,17beta-estriol 3-O-(beta-D-glucuronate) + 3'-phosphoadenylyl sulfate = 16alpha,17beta-estriol 3-O-(3-sulfo-beta-D-glucuronate) + adenosine 3',5'-bisphosphate + H(+). It catalyses the reaction 16alpha,17beta-estriol 16-O-(beta-D-glucuronate) + 3'-phosphoadenylyl sulfate = 16alpha,17beta-estriol 16-O-(3-sulfo-beta-D-glucuronate) + adenosine 3',5'-bisphosphate + H(+). The enzyme catalyses 16alpha,17beta-estriol 17-O-(beta-D-glucuronate) + 3'-phosphoadenylyl sulfate = 16alpha,17beta-estriol 17-O-(3-sulfo-beta-D-glucuronate) + adenosine 3',5'-bisphosphate + H(+). It carries out the reaction estrone 3-O-(beta-D-glucuronate) + 3'-phosphoadenylyl sulfate = estrone 3-O-(3-sulfo-beta-D-glucuronate) + adenosine 3',5'-bisphosphate + H(+). The catalysed reaction is 3alpha,20alpha-dihydroxy-5beta-pregnane 3-O-(beta-D-glucuronate) + 3'-phosphoadenylyl sulfate = 3alpha,20alpha-dihydroxy-5beta-pregnane 3-O-(3-sulfo-beta-D-glucuronate) + adenosine 3',5'-bisphosphate + H(+). It catalyses the reaction testosterone 17-O-(beta-D-glucuronate) + 3'-phosphoadenylyl sulfate = testosterone 17-O-(3-sulfo-beta-D-glucuronate) + adenosine 3',5'-bisphosphate + H(+). The enzyme catalyses 3beta-androst-5-en-17-one 3-O-(beta-D-glucuronate) + 3'-phosphoadenylyl sulfate = 3beta-androst-5-en-17-one 3-O-(3-sulfo-beta-D-glucuronate) + adenosine 3',5'-bisphosphate + H(+). It carries out the reaction 3alpha,17alpha-dihydroxy-5beta-androstane-11-one-17beta-carboxylate 3-O-(beta-D-glucuronate) + 3'-phosphoadenylyl sulfate = 3alpha,17alpha-dihydroxy-5beta-androstane-11-one-17beta-carboxylate 3-O-(3-sulfo-beta-D-glucuronate) + adenosine 3',5'-bisphosphate + H(+). The catalysed reaction is 3alpha-hydroxyetiocholan-17-one 3-O-(beta-D-glucuronate) + 3'-phosphoadenylyl sulfate = 3alpha-hydroxyetiocholan-17-one 3-O-(3-sulfo-beta-D-glucuronate) + adenosine 3',5'-bisphosphate + H(+). The protein operates within steroid metabolism. It functions in the pathway protein modification; carbohydrate sulfation. Functionally, catalyzes the transfer of sulfate from 3'-phosphoadenylyl sulfate (PAPS) to position 3 of terminal glucuronic acid of both protein- and lipid-linked oligosaccharides. Participates in biosynthesis of HNK-1 carbohydrate structure 3-O-sulfo-beta-D-GlcA-(1-&gt;3)-beta-D-Gal-(1-&gt;4)-D-GlcNAc-R, a sulfated glucuronyl-lactosaminyl residue carried by many neural recognition molecules, which is involved in cell interactions during ontogenetic development and in synaptic plasticity in the adult. May be indirectly involved in synapse plasticity of the hippocampus, via its role in HNK-1 biosynthesis. Sulfates terminal glucuronyl residue of the laminin globular (LG)-domain binding epitope on DAG1/alpha-dystroglycan and prevents further polymerization by LARGE1 glycosyltransferase. Likely defines the chain length of LG epitope, conferring binding specificity to extracellular matrix components. Plays a role in down-regulating the steroid hormones. Sulfates glucuronidated estrogens and androgens with an impact in hormone cycle and fertility. Has a preference for glucuronyl moiety at the 3-hydroxyl group of a sterol ring rather than the 17-hydroxyl group, showing high catalytic efficiency for 17beta-estradiol 3-O-(beta-D-glucuronate) and dehydroepiandrosterone 3-O-(beta-D-glucuronate) hormones. This is Carbohydrate sulfotransferase 10 (CHST10) from Pongo abelii (Sumatran orangutan).